Consider the following 143-residue polypeptide: NADH-quinone oxidoreductase subunit A (143 aa).

3 consecutive transmembrane segments (helical) span residues 8–28, 63–83, and 93–113; these read FGNV…GYLT, FYVV…LFPW, and FALI…VYAW.

The protein belongs to the complex I subunit 3 family. As to quaternary structure, NDH-1 is composed of 14 different subunits. Subunits NuoA, H, J, K, L, M, N constitute the membrane sector of the complex.

The protein localises to the cell inner membrane. It carries out the reaction a quinone + NADH + 5 H(+)(in) = a quinol + NAD(+) + 4 H(+)(out). NDH-1 shuttles electrons from NADH, via FMN and iron-sulfur (Fe-S) centers, to quinones in the respiratory chain. The immediate electron acceptor for the enzyme in this species is believed to be a menaquinone. Couples the redox reaction to proton translocation (for every two electrons transferred, four hydrogen ions are translocated across the cytoplasmic membrane), and thus conserves the redox energy in a proton gradient. This chain is NADH-quinone oxidoreductase subunit A, found in Chlorobium luteolum (strain DSM 273 / BCRC 81028 / 2530) (Pelodictyon luteolum).